Reading from the N-terminus, the 347-residue chain is Anthranilate phosphoribosyltransferase (347 aa).

5-phospho-alpha-D-ribose 1-diphosphate is bound by residues Gly88, Gly91–Asp92, Thr96, Asn98–Thr101, Lys116–Ser124, and Ser128. Gly88 contacts anthranilate. Ser100 contacts Mg(2+). Arg174 provides a ligand contact to anthranilate. Mg(2+) is bound by residues Asp233 and Glu234.

The protein belongs to the anthranilate phosphoribosyltransferase family. In terms of assembly, homodimer. It depends on Mg(2+) as a cofactor.

The enzyme catalyses N-(5-phospho-beta-D-ribosyl)anthranilate + diphosphate = 5-phospho-alpha-D-ribose 1-diphosphate + anthranilate. It participates in amino-acid biosynthesis; L-tryptophan biosynthesis; L-tryptophan from chorismate: step 2/5. Functionally, catalyzes the transfer of the phosphoribosyl group of 5-phosphorylribose-1-pyrophosphate (PRPP) to anthranilate to yield N-(5'-phosphoribosyl)-anthranilate (PRA). The protein is Anthranilate phosphoribosyltransferase of Polaromonas sp. (strain JS666 / ATCC BAA-500).